We begin with the raw amino-acid sequence, 618 residues long: Transport protein particle subunit trs85-2 (618 aa).

Belongs to the TRS85 family. As to quaternary structure, part of the multisubunit TRAPP (transport protein particle) complexes I and II.

It localises to the golgi apparatus. It is found in the cis-Golgi network. Its function is as follows. Component of the TRAPP I and TRAPP II complexes. TRAPP I plays a key role in the late stages of endoplasmic reticulum to Golgi traffic. TRAPP II seems to play a role in intra-Golgi transport. Has a role late in meiosis following DNA replication. The polypeptide is Transport protein particle subunit trs85-2 (trs85-2) (Schizosaccharomyces pombe (strain 972 / ATCC 24843) (Fission yeast)).